A 330-amino-acid polypeptide reads, in one-letter code: Major ferric iron-binding protein (330 aa).

An N-terminal signal peptide occupies residues 1 to 22; the sequence is MKTSIRYALLAAALTAATPALA. Positions 31, 79, 217, and 218 each coordinate Fe cation.

The protein belongs to the bacterial solute-binding protein 1 family.

Its subcellular location is the periplasm. Functionally, this protein may be a central component in the iron-acquisition system. This chain is Major ferric iron-binding protein (fbp), found in Neisseria gonorrhoeae.